Reading from the N-terminus, the 289-residue chain is Acetyl-coenzyme A carboxylase carboxyl transferase subunit beta 2 (289 aa).

The region spanning 25–289 is the CoA carboxyltransferase N-terminal domain; it reads VWTKCPSCDQ…TNTSIRLEVK (265 aa). Residues cysteine 29, cysteine 32, cysteine 48, and cysteine 51 each contribute to the Zn(2+) site. The segment at 29–51 adopts a C4-type zinc-finger fold; sequence CPSCDQVLYRIALKENLEVCPKC.

This sequence belongs to the AccD/PCCB family. In terms of assembly, acetyl-CoA carboxylase is a heterohexamer composed of biotin carboxyl carrier protein (AccB), biotin carboxylase (AccC) and two subunits each of ACCase subunit alpha (AccA) and ACCase subunit beta (AccD). Zn(2+) is required as a cofactor.

The protein resides in the cytoplasm. The catalysed reaction is N(6)-carboxybiotinyl-L-lysyl-[protein] + acetyl-CoA = N(6)-biotinyl-L-lysyl-[protein] + malonyl-CoA. It participates in lipid metabolism; malonyl-CoA biosynthesis; malonyl-CoA from acetyl-CoA: step 1/1. In terms of biological role, component of the acetyl coenzyme A carboxylase (ACC) complex. Biotin carboxylase (BC) catalyzes the carboxylation of biotin on its carrier protein (BCCP) and then the CO(2) group is transferred by the transcarboxylase to acetyl-CoA to form malonyl-CoA. The polypeptide is Acetyl-coenzyme A carboxylase carboxyl transferase subunit beta 2 (Vibrio parahaemolyticus serotype O3:K6 (strain RIMD 2210633)).